The chain runs to 225 residues: Ribose-5-phosphate isomerase A (225 aa).

Substrate contacts are provided by residues 32-35 (TGST), 85-88 (DGAD), and 98-101 (KGGG). The Proton acceptor role is filled by E107. Position 125 (K125) interacts with substrate.

It belongs to the ribose 5-phosphate isomerase family. In terms of assembly, homodimer.

It carries out the reaction aldehydo-D-ribose 5-phosphate = D-ribulose 5-phosphate. It functions in the pathway carbohydrate degradation; pentose phosphate pathway; D-ribose 5-phosphate from D-ribulose 5-phosphate (non-oxidative stage): step 1/1. Its function is as follows. Catalyzes the reversible conversion of ribose-5-phosphate to ribulose 5-phosphate. The polypeptide is Ribose-5-phosphate isomerase A (Marinobacter nauticus (strain ATCC 700491 / DSM 11845 / VT8) (Marinobacter aquaeolei)).